Here is a 561-residue protein sequence, read N- to C-terminus: Efflux pump bfoC (561 aa).

The segment at 1-55 (MSDTARILGGPSASSSRDGGMELNSFTEVSQTNSRSHSTKEEEGQVDDQQRPARE) is disordered. The segment covering 24-36 (NSFTEVSQTNSRS) has biased composition (polar residues). A compositionally biased stretch (basic and acidic residues) spans 38 to 55 (STKEEEGQVDDQQRPARE). 13 consecutive transmembrane segments (helical) span residues 59–79 (GVLGGYKLVLVTIGLCFCIFC), 103–123 (DVGWYASAYLLTTCAVTLTFG), 128–148 (FFPIKWVYLSALLIFELGSFI), 164–184 (VAGLGGGGLLSGSLLIISQCV), 194–214 (GFIMSIFAVASVIAPLMGGAF), 222–242 (WCFYINLPFGLVSAVVILFTF), 257–277 (AVGLDPLGTATFLPGIVCLLL), 293–313 (VVALFVLFGVLLVCFIGLQLW), 335–355 (LYGFCLNGAMFTFVYYLPIWF), 378–398 (VVFAIISGVLVSMTGYLGPFM), 425–445 (IGYQVLLGLSIGVGFQVPIFV), 457–477 (TATALMTFIQLLGGAIFVSVA), and 530–550 (VHTFYLAIGLAAASFLAATVI).

It belongs to the major facilitator superfamily. TCR/Tet family.

It localises to the cell membrane. Efflux pump; part of the gene cluster that mediates the biosynthesis of bifonsecin B, a dimeric gamma-naphthopyrone. The sequence is that of Efflux pump bfoC from Aspergillus brasiliensis (strain CBS 101740 / IMI 381727 / IBT 21946).